The following is a 361-amino-acid chain: T-box-containing protein TBX6L (361 aa).

Residues 36–209 (LWMKFHQIGT…NNPFAKGFRE (174 aa)) constitute a DNA-binding region (T-box). Disordered stretches follow at residues 203–259 (FAKG…VKEE) and 280–323 (HAFP…QLPS). Basic and acidic residues-rich tracts occupy residues 206–220 (GFRE…EGRA) and 234–259 (KLPE…VKEE). Residues 280-290 (HAFPAASPAPA) show a composition bias toward low complexity.

The protein localises to the nucleus. Its function is as follows. May be involved in regulating somitogenesis. This chain is T-box-containing protein TBX6L (TBX6L), found in Gallus gallus (Chicken).